Reading from the N-terminus, the 794-residue chain is Zinc finger protein 148 (794 aa).

Residue Lys6 forms a Glycyl lysine isopeptide (Lys-Gly) (interchain with G-Cter in SUMO2) linkage. Ser51 is subject to Phosphoserine. Residues Lys88, Lys115, and Lys132 each participate in a glycyl lysine isopeptide (Lys-Gly) (interchain with G-Cter in SUMO2) cross-link. The segment at 171-193 (HVCEHCNAAFRTNYHLQRHVFIH) adopts a C2H2-type 1 zinc-finger fold. At Thr194 the chain carries Phosphothreonine. C2H2-type zinc fingers lie at residues 199–221 (FQCS…EKIH) and 227–249 (FRCD…KRTH). Ser250 carries the post-translational modification Phosphoserine. The C2H2-type 4 zinc finger occupies 255-278 (YQCEYCLQYFSRTDRVLKHKRMCH). Lys291 is covalently cross-linked (Glycyl lysine isopeptide (Lys-Gly) (interchain with G-Cter in SUMO2)). Residues 298–336 (EEDSGFSTSPKDNSLPKKKRQKTEKKSSGMDKESALDKS) form a disordered region. 2 positions are modified to phosphoserine: Ser301 and Ser306. Residue Lys308 forms a Glycyl lysine isopeptide (Lys-Gly) (interchain with G-Cter in SUMO2) linkage. Over residues 321–336 (EKKSSGMDKESALDKS) the composition is skewed to basic and acidic residues. Lys356 participates in a covalent cross-link: Glycyl lysine isopeptide (Lys-Gly) (interchain with G-Cter in SUMO1); alternate. Lys356 is covalently cross-linked (Glycyl lysine isopeptide (Lys-Gly) (interchain with G-Cter in SUMO2); alternate). A Glycyl lysine isopeptide (Lys-Gly) (interchain with G-Cter in SUMO2) cross-link involves residue Lys402. A Phosphoserine modification is found at Ser412. Residues Lys421 and Lys424 each participate in a glycyl lysine isopeptide (Lys-Gly) (interchain with G-Cter in SUMO2) cross-link. Over residues 574–588 (NSSEVPEVTPSENVG) the composition is skewed to polar residues. A disordered region spans residues 574–599 (NSSEVPEVTPSENVGSSSQASSSDKA). N6-acetyllysine is present on Lys607. Residues Ser665 and Ser784 each carry the phosphoserine modification.

This sequence belongs to the krueppel C2H2-type zinc-finger protein family. In terms of assembly, interacts with HNRNPDL. Interacts with the 5FMC complex; the interaction requires association with CHTOP. Interacts with CAVIN1. Sumoylated with SUMO2. Desumoylated by SENP3, resulting in the stimulation of transcription of its target genes.

It is found in the nucleus. Its function is as follows. Involved in transcriptional regulation. Represses the transcription of a number of genes including gastrin, stromelysin and enolase. Binds to the G-rich box in the enhancer region of these genes. The protein is Zinc finger protein 148 (ZNF148) of Pongo abelii (Sumatran orangutan).